Reading from the N-terminus, the 166-residue chain is Ribosome maturation factor RimM (166 aa).

In terms of domain architecture, PRC barrel spans 91–163 (DDGFYDHELE…TCVITPPEGL (73 aa)).

It belongs to the RimM family. Binds ribosomal protein uS19.

The protein resides in the cytoplasm. Its function is as follows. An accessory protein needed during the final step in the assembly of 30S ribosomal subunit, possibly for assembly of the head region. Essential for efficient processing of 16S rRNA. May be needed both before and after RbfA during the maturation of 16S rRNA. It has affinity for free ribosomal 30S subunits but not for 70S ribosomes. In Corynebacterium diphtheriae (strain ATCC 700971 / NCTC 13129 / Biotype gravis), this protein is Ribosome maturation factor RimM.